A 973-amino-acid chain; its full sequence is FHF complex subunit HOOK-interacting protein 1B (973 aa).

Disordered stretches follow at residues 466-493 (SSPS…VVTV), 510-547 (SLGG…PGEL), and 573-647 (SAPY…EGAK). A Phosphoserine modification is found at S467. Positions 482-493 (SPSVDSSSVVTV) are enriched in low complexity. A phosphoserine mark is found at S510, S523, S529, and S533. Low complexity-rich tracts occupy residues 529–538 (SPASSPGRRP) and 622–639 (GARE…NGLP). 2 positions are modified to phosphoserine: S859 and S898.

It belongs to the FHIP family. Component of the FTS/Hook/FHIP complex (FHF complex), composed of AKTIP/FTS, FHIP1B, and one or more members of the Hook family of proteins HOOK1, HOOK2, and HOOK3. The FHF complex associates with the homotypic vesicular sorting complex (the HOPS complex).

Functionally, component of the FTS/Hook/FHIP complex (FHF complex). The FHF complex may function to promote vesicle trafficking and/or fusion via the homotypic vesicular protein sorting complex (the HOPS complex). FHF complex promotes the distribution of AP-4 complex to the perinuclear area of the cell. The protein is FHF complex subunit HOOK-interacting protein 1B (FHIP1B) of Bos taurus (Bovine).